Here is a 251-residue protein sequence, read N- to C-terminus: MLITDTLSPQAFEEALRAKGAFYHIHHPYHIAMHNGEATREQIQGWVANRFYYQTTIPLKDAAIMANCPDAQTRRKWVQRILDHDGSHGEDGGIEAWLRLGEAVGLSRDDLLSERHVLPGVRFAVDAYLNFARRACWQEAACSSLTELFAPQIHQSRLDSWPQHYPWIKEEGYFYFRSRLSQANRDVEHGLALAKTYCDSAEKQNRMLEILQFKLDILWSMLDAMTMAYALQRPPYHTVTDKAAWHTTRLV.

It belongs to the PqqC family.

The catalysed reaction is 6-(2-amino-2-carboxyethyl)-7,8-dioxo-1,2,3,4,7,8-hexahydroquinoline-2,4-dicarboxylate + 3 O2 = pyrroloquinoline quinone + 2 H2O2 + 2 H2O + H(+). It participates in cofactor biosynthesis; pyrroloquinoline quinone biosynthesis. Functionally, ring cyclization and eight-electron oxidation of 3a-(2-amino-2-carboxyethyl)-4,5-dioxo-4,5,6,7,8,9-hexahydroquinoline-7,9-dicarboxylic-acid to PQQ. This chain is Pyrroloquinoline-quinone synthase, found in Klebsiella pneumoniae (strain 342).